The sequence spans 403 residues: GPI-N-acetylgalactosamine transferase PGAP4 (403 aa).

The Cytoplasmic segment spans residues 1-22 (MSTSTSPAAMLLRRLRRLSWGS). The helical transmembrane segment at 23–43 (TAVQLFILTVVTFGLLAPLAC) threads the bilayer. Topologically, residues 44–259 (HRLLHSYFYL…RLQHYTNPEP (216 aa)) are lumenal. Position 109 (V109) interacts with UDP-N-acetyl-alpha-D-galactosamine. Disulfide bonds link C132–C136 and C144–C194. Positions 211 to 213 (EDD) match the DXD motif motif. Residues 260–280 (MRILEWVGVGMLLGPLLTWIY) traverse the membrane as a helical segment. Residues 281-287 (MRFASRP) are Cytoplasmic-facing. The helical transmembrane segment at 288–308 (GFSWPVMLFFSLYSMGLVELV) threads the bilayer. The Lumenal portion of the chain corresponds to 309-403 (GRHYFLELRR…LRYNFHPSLL (95 aa)). C332 and C333 form a disulfide bridge. Positions 334, 335, and 362 each coordinate UDP-N-acetyl-alpha-D-galactosamine.

This sequence belongs to the PGAP4 family. Post-translationally, glycosylated.

The protein resides in the golgi apparatus membrane. Its function is as follows. Golgi-resident glycosylphosphatidylinositol (GPI)-N-acetylgalactosamine transferase that catalyzes the N-acetyl-beta-D-galactosamine transfer from an UDP-N-acetyl-alpha-D-galactosamine to the 4-OH-position of first mannose of the glycosylphosphatidylinositol (GPI) of a GPI-anchored protein (GPI-AP). This modification occurs after the fatty acid remodeling step of the GPI-anchor maturation. The sequence is that of GPI-N-acetylgalactosamine transferase PGAP4 from Pongo abelii (Sumatran orangutan).